Here is a 295-residue protein sequence, read N- to C-terminus: MMRILLFVATNLAVVLVASITLSLFGFNGFMAANGVDLNLSSLLVFCAVFGFAGSLVSLFISKWMAKMSTGTQIISQPRTRHEQWLLQTVEELSREAGIKMPEVGIFPAYEANAFATGWNRNDALVAVSQGLLERFSPDEVRAVLAHEIGHVANGDMVTLALVQGVVNTFVMFFARIIGNFVDKVIFKNEEGQGIAYYVATIVAELVLGILASMIVMWFSRRREYRADEAGAQLAGTAAMIGALQRLRVEQGLPVHMPDTMKAFGINGGLKHGLAGLLMSHPPLEERIEALRRRG.

The next 2 helical transmembrane spans lie at 4–24 and 41–61; these read ILLF…TLSL and SSLL…SLFI. H147 contacts Zn(2+). Residue E148 is part of the active site. Residue H151 participates in Zn(2+) binding. The next 2 membrane-spanning stretches (helical) occupy residues 158-178 and 199-219; these read VTLA…ARII and VATI…VMWF. E224 lines the Zn(2+) pocket.

This sequence belongs to the peptidase M48B family. The cofactor is Zn(2+).

It localises to the cell inner membrane. The chain is Protease HtpX from Pseudomonas putida (strain W619).